A 309-amino-acid polypeptide reads, in one-letter code: UDP-N-acetylenolpyruvoylglucosamine reductase (309 aa).

Residues 34-221 enclose the FAD-binding PCMH-type domain; that stretch reads RVGGPAQVLF…TAAREAAQPI (188 aa). R179 is a catalytic residue. S228 (proton donor) is an active-site residue. E298 is an active-site residue.

The protein belongs to the MurB family. It depends on FAD as a cofactor.

It is found in the cytoplasm. The catalysed reaction is UDP-N-acetyl-alpha-D-muramate + NADP(+) = UDP-N-acetyl-3-O-(1-carboxyvinyl)-alpha-D-glucosamine + NADPH + H(+). Its pathway is cell wall biogenesis; peptidoglycan biosynthesis. Its function is as follows. Cell wall formation. The sequence is that of UDP-N-acetylenolpyruvoylglucosamine reductase from Methylorubrum extorquens (strain PA1) (Methylobacterium extorquens).